The sequence spans 372 residues: NAD(P)H-quinone oxidoreductase subunit 1 (372 aa).

The next 8 membrane-spanning stretches (helical) occupy residues 27 to 47 (AIWM…GVLV), 97 to 117 (WLFT…FLIV), 128 to 148 (VGMG…GLLM), 166 to 186 (AAQS…IAMM), 204 to 224 (ILGW…IAAL), 249 to 269 (YSGM…ILSS), 308 to 328 (SLGI…AILL), and 351 to 371 (VGLV…FAFG).

Belongs to the complex I subunit 1 family. In terms of assembly, NDH-1 is composed of at least 11 different subunits.

Its subcellular location is the cellular thylakoid membrane. It catalyses the reaction a plastoquinone + NADH + (n+1) H(+)(in) = a plastoquinol + NAD(+) + n H(+)(out). The enzyme catalyses a plastoquinone + NADPH + (n+1) H(+)(in) = a plastoquinol + NADP(+) + n H(+)(out). Its function is as follows. NDH-1 shuttles electrons from an unknown electron donor, via FMN and iron-sulfur (Fe-S) centers, to quinones in the respiratory and/or the photosynthetic chain. The immediate electron acceptor for the enzyme in this species is believed to be plastoquinone. Couples the redox reaction to proton translocation, and thus conserves the redox energy in a proton gradient. The polypeptide is NAD(P)H-quinone oxidoreductase subunit 1 (Nostoc punctiforme (strain ATCC 29133 / PCC 73102)).